A 177-amino-acid polypeptide reads, in one-letter code: Large ribosomal subunit protein uL6 (177 aa).

Belongs to the universal ribosomal protein uL6 family. As to quaternary structure, part of the 50S ribosomal subunit.

This protein binds to the 23S rRNA, and is important in its secondary structure. It is located near the subunit interface in the base of the L7/L12 stalk, and near the tRNA binding site of the peptidyltransferase center. This chain is Large ribosomal subunit protein uL6, found in Enterobacter sp. (strain 638).